The sequence spans 261 residues: 3-methyl-2-oxobutanoate hydroxymethyltransferase (261 aa).

The Mg(2+) site is built by aspartate 44 and aspartate 83. Residues 44–45 (DS), aspartate 83, and lysine 112 contribute to the 3-methyl-2-oxobutanoate site. Glutamate 114 contacts Mg(2+). Glutamate 181 functions as the Proton acceptor in the catalytic mechanism.

This sequence belongs to the PanB family. In terms of assembly, homodecamer; pentamer of dimers. Mg(2+) is required as a cofactor.

Its subcellular location is the cytoplasm. It carries out the reaction 3-methyl-2-oxobutanoate + (6R)-5,10-methylene-5,6,7,8-tetrahydrofolate + H2O = 2-dehydropantoate + (6S)-5,6,7,8-tetrahydrofolate. It participates in cofactor biosynthesis; (R)-pantothenate biosynthesis; (R)-pantoate from 3-methyl-2-oxobutanoate: step 1/2. Its function is as follows. Catalyzes the reversible reaction in which hydroxymethyl group from 5,10-methylenetetrahydrofolate is transferred onto alpha-ketoisovalerate to form ketopantoate. The polypeptide is 3-methyl-2-oxobutanoate hydroxymethyltransferase (Acidithiobacillus ferrooxidans (strain ATCC 23270 / DSM 14882 / CIP 104768 / NCIMB 8455) (Ferrobacillus ferrooxidans (strain ATCC 23270))).